The sequence spans 268 residues: Thymidylate synthase (268 aa).

Residue arginine 27 coordinates dUMP. Histidine 57 provides a ligand contact to (6R)-5,10-methylene-5,6,7,8-tetrahydrofolate. 132–133 serves as a coordination point for dUMP; it reads RR. Cysteine 152 functions as the Nucleophile in the catalytic mechanism. Residues 172-175, asparagine 183, and 213-215 contribute to the dUMP site; these read RSAD and HVY. Aspartate 175 lines the (6R)-5,10-methylene-5,6,7,8-tetrahydrofolate pocket. Alanine 267 lines the (6R)-5,10-methylene-5,6,7,8-tetrahydrofolate pocket.

This sequence belongs to the thymidylate synthase family. Bacterial-type ThyA subfamily. In terms of assembly, homodimer.

It is found in the cytoplasm. It catalyses the reaction dUMP + (6R)-5,10-methylene-5,6,7,8-tetrahydrofolate = 7,8-dihydrofolate + dTMP. The protein operates within pyrimidine metabolism; dTTP biosynthesis. Its function is as follows. Catalyzes the reductive methylation of 2'-deoxyuridine-5'-monophosphate (dUMP) to 2'-deoxythymidine-5'-monophosphate (dTMP) while utilizing 5,10-methylenetetrahydrofolate (mTHF) as the methyl donor and reductant in the reaction, yielding dihydrofolate (DHF) as a by-product. This enzymatic reaction provides an intracellular de novo source of dTMP, an essential precursor for DNA biosynthesis. In Kineococcus radiotolerans (strain ATCC BAA-149 / DSM 14245 / SRS30216), this protein is Thymidylate synthase.